Consider the following 93-residue polypeptide: Small ribosomal subunit protein uS17 (93 aa).

It belongs to the universal ribosomal protein uS17 family. Part of the 30S ribosomal subunit.

One of the primary rRNA binding proteins, it binds specifically to the 5'-end of 16S ribosomal RNA. The sequence is that of Small ribosomal subunit protein uS17 from Bordetella bronchiseptica (strain ATCC BAA-588 / NCTC 13252 / RB50) (Alcaligenes bronchisepticus).